The sequence spans 659 residues: DNA ligase (659 aa).

NAD(+)-binding positions include 32 to 36 (DFEYD), 81 to 82 (SL), and Glu-111. Lys-113 acts as the N6-AMP-lysine intermediate in catalysis. Positions 134, 168, 280, and 304 each coordinate NAD(+). Residues Cys-398, Cys-401, Cys-416, and Cys-421 each contribute to the Zn(2+) site. In terms of domain architecture, BRCT spans 585–655 (ETNSIYFQKR…KELNIPIINE (71 aa)).

It belongs to the NAD-dependent DNA ligase family. LigA subfamily. Mg(2+) is required as a cofactor. Requires Mn(2+) as cofactor.

It carries out the reaction NAD(+) + (deoxyribonucleotide)n-3'-hydroxyl + 5'-phospho-(deoxyribonucleotide)m = (deoxyribonucleotide)n+m + AMP + beta-nicotinamide D-nucleotide.. Its function is as follows. DNA ligase that catalyzes the formation of phosphodiester linkages between 5'-phosphoryl and 3'-hydroxyl groups in double-stranded DNA using NAD as a coenzyme and as the energy source for the reaction. It is essential for DNA replication and repair of damaged DNA. This is DNA ligase from Mycoplasma genitalium (strain ATCC 33530 / DSM 19775 / NCTC 10195 / G37) (Mycoplasmoides genitalium).